A 258-amino-acid chain; its full sequence is Probable N-acetylglucosaminyl-phosphatidylinositol de-N-acetylase (258 aa).

The interval 147 to 170 (KSSSTTTTSTTSSSSSSSSLSNRT) is disordered. The span at 148–170 (SSSTTTTSTTSSSSSSSSLSNRT) shows a compositional bias: low complexity.

The protein belongs to the PIGL family.

It localises to the endoplasmic reticulum membrane. The enzyme catalyses a 6-(N-acetyl-alpha-D-glucosaminyl)-1-(1,2-diacyl-sn-glycero-3-phospho)-1D-myo-inositol + H2O = a 6-(alpha-D-glucosaminyl)-1-(1,2-diacyl-sn-glycero-3-phospho)-1D-myo-inositol + acetate. It functions in the pathway glycolipid biosynthesis; glycosylphosphatidylinositol-anchor biosynthesis. Its function is as follows. Involved in the second step of GPI biosynthesis. De-N-acetylation of N-acetylglucosaminyl-phosphatidylinositol. In Dictyostelium discoideum (Social amoeba), this protein is Probable N-acetylglucosaminyl-phosphatidylinositol de-N-acetylase (pigl).